A 210-amino-acid polypeptide reads, in one-letter code: Resolvase (210 aa).

The region spanning 6 to 150 (VARVYLRVSS…EDRRERQRQG (145 aa)) is the Resolvase/invertase-type recombinase catalytic domain. Serine 14 (O-(5'-phospho-DNA)-serine intermediate) is an active-site residue. The H-T-H motif DNA-binding region spans 191 to 210 (GVSVSQVKRVWAQNQTKDKV).

Belongs to the site-specific recombinase resolvase family.

In terms of biological role, site-specific recombination protein. The chain is Resolvase (stbA) from Pseudomonas syringae pv. tomato.